The sequence spans 692 residues: Elongation factor G (692 aa).

The tr-type G domain occupies 8-282 (KDYRNIGIMA…AVVDYLPSPL (275 aa)). GTP is bound by residues 17 to 24 (AHIDAGKT), 81 to 85 (DTPGH), and 135 to 138 (NKMD).

The protein belongs to the TRAFAC class translation factor GTPase superfamily. Classic translation factor GTPase family. EF-G/EF-2 subfamily.

The protein localises to the cytoplasm. Catalyzes the GTP-dependent ribosomal translocation step during translation elongation. During this step, the ribosome changes from the pre-translocational (PRE) to the post-translocational (POST) state as the newly formed A-site-bound peptidyl-tRNA and P-site-bound deacylated tRNA move to the P and E sites, respectively. Catalyzes the coordinated movement of the two tRNA molecules, the mRNA and conformational changes in the ribosome. The chain is Elongation factor G (fusA) from Mycoplasmopsis pulmonis (strain UAB CTIP) (Mycoplasma pulmonis).